We begin with the raw amino-acid sequence, 730 residues long: Cyclin-dependent kinase 12 (730 aa).

Disordered regions lie at residues Met1–Ser230 and Phe246–Arg283. Positions Thr9–Arg21 are enriched in basic and acidic residues. The span at Ser57 to Trp67 shows a compositional bias: polar residues. Basic and acidic residues predominate over residues Gly75–Lys94. Composition is skewed to basic residues over residues Arg95 to Asn122 and Lys151 to Ser163. Residues Phe194–Phe203 are compositionally biased toward low complexity. Residues Ser204–Ser230 are compositionally biased toward pro residues. Positions Met313–Ile605 constitute a Protein kinase domain. ATP-binding positions include Ile317–Val325, Lys340, and Glu398–Asp403. The active-site Proton acceptor is the Asp444. The disordered stretch occupies residues Asp623 to Lys730. Residue His625 participates in ATP binding. Positions Asn676 to Ala688 are enriched in basic residues. Positions Asn714–Lys730 are enriched in polar residues.

This sequence belongs to the protein kinase superfamily. CMGC Ser/Thr protein kinase family. CDC2/CDKX subfamily.

It is found in the nucleus. It catalyses the reaction [DNA-directed RNA polymerase] + ATP = phospho-[DNA-directed RNA polymerase] + ADP + H(+). The enzyme catalyses L-seryl-[protein] + ATP = O-phospho-L-seryl-[protein] + ADP + H(+). The catalysed reaction is L-threonyl-[protein] + ATP = O-phospho-L-threonyl-[protein] + ADP + H(+). In terms of biological role, cyclin-dependent kinase which displays CTD kinase activity: hyperphosphorylates 'Ser-2' in the C-terminal heptapeptide repeat domain (CTD) of the largest RNA polymerase II subunit, thereby acting as a key regulator of transcription elongation. Required for normal reproduction. This chain is Cyclin-dependent kinase 12, found in Caenorhabditis elegans.